Here is an 848-residue protein sequence, read N- to C-terminus: ATP-dependent Clp protease ATP-binding subunit ClpC1 (848 aa).

The region spanning 2–144 is the Clp R domain; the sequence is FERFTDRARK…RQQVIQLLSG (143 aa). Repeat stretches follow at residues 5–70 and 80–144; these read FTDR…IGQG and FTPR…LLSG. The segment at 171-418 is i; the sequence is LDQFGRNLTA…RMRIRRMTAP (248 aa). 216–223 is a binding site for ATP; sequence GEPGVGKT. In terms of domain architecture, UVR spans 425 to 460; sequence DEKIAEARREKESAIDAQDFEKAASLRDREKTLVAQ. An II region spans residues 479 to 670; sequence VDDEQIAEVL…VLIFTSNLGT (192 aa). 553–560 contacts ATP; that stretch reads GPSGVGKT. Residues 821–848 are disordered; the sequence is TGTRKPPAEPDLAKAGAHSAGGPEPAAR.

This sequence belongs to the ClpA/ClpB family. ClpC subfamily.

Its function is as follows. ATP-dependent specificity component of the Clp protease. It directs the protease to specific substrates. Can perform chaperone functions in the absence of ClpP. This chain is ATP-dependent Clp protease ATP-binding subunit ClpC1 (clpC1), found in Mycobacterium tuberculosis (strain CDC 1551 / Oshkosh).